The chain runs to 233 residues: UPF0725 protein At4g17990 (233 aa).

Belongs to the UPF0725 (EMB2204) family.

The chain is UPF0725 protein At4g17990 from Arabidopsis thaliana (Mouse-ear cress).